The following is a 1377-amino-acid chain: DNA-directed RNA polymerase subunit beta (1377 aa).

It belongs to the RNA polymerase beta chain family. In terms of assembly, the RNAP catalytic core consists of 2 alpha, 1 beta, 1 beta' and 1 omega subunit. When a sigma factor is associated with the core the holoenzyme is formed, which can initiate transcription.

It carries out the reaction RNA(n) + a ribonucleoside 5'-triphosphate = RNA(n+1) + diphosphate. DNA-dependent RNA polymerase catalyzes the transcription of DNA into RNA using the four ribonucleoside triphosphates as substrates. This chain is DNA-directed RNA polymerase subunit beta, found in Aromatoleum aromaticum (strain DSM 19018 / LMG 30748 / EbN1) (Azoarcus sp. (strain EbN1)).